A 221-amino-acid chain; its full sequence is Probable GTP-binding protein EngB (221 aa).

Positions 37 to 219 constitute an EngB-type G domain; it reads QGIEIALAGR…RAAIVKLLRE (183 aa). GTP is bound by residues 45-52, 72-76, 97-100, 164-167, and 198-200; these read GRSNVGKS, GRTQE, DMPG, TKTD, and TSS. 2 residues coordinate Mg(2+): Ser52 and Thr74.

The protein belongs to the TRAFAC class TrmE-Era-EngA-EngB-Septin-like GTPase superfamily. EngB GTPase family. The cofactor is Mg(2+).

In terms of biological role, necessary for normal cell division and for the maintenance of normal septation. The chain is Probable GTP-binding protein EngB from Afipia carboxidovorans (strain ATCC 49405 / DSM 1227 / KCTC 32145 / OM5) (Oligotropha carboxidovorans).